A 90-amino-acid chain; its full sequence is Probable Fe(2+)-trafficking protein (90 aa).

This sequence belongs to the Fe(2+)-trafficking protein family.

Could be a mediator in iron transactions between iron acquisition and iron-requiring processes, such as synthesis and/or repair of Fe-S clusters in biosynthetic enzymes. This chain is Probable Fe(2+)-trafficking protein, found in Nitrosomonas europaea (strain ATCC 19718 / CIP 103999 / KCTC 2705 / NBRC 14298).